Reading from the N-terminus, the 430-residue chain is Phosphoribosylamine--glycine ligase (430 aa).

The ATP-grasp domain occupies Arg-109–Asn-314. Position 136 to 192 (Ile-136 to Thr-192) interacts with ATP. Residues Gln-272, Glu-284, and Asn-286 each contribute to the Mg(2+) site. Mn(2+) contacts are provided by Gln-272, Glu-284, and Asn-286.

This sequence belongs to the GARS family. It depends on Mg(2+) as a cofactor. Mn(2+) is required as a cofactor.

It catalyses the reaction 5-phospho-beta-D-ribosylamine + glycine + ATP = N(1)-(5-phospho-beta-D-ribosyl)glycinamide + ADP + phosphate + H(+). It functions in the pathway purine metabolism; IMP biosynthesis via de novo pathway; N(1)-(5-phospho-D-ribosyl)glycinamide from 5-phospho-alpha-D-ribose 1-diphosphate: step 2/2. The chain is Phosphoribosylamine--glycine ligase from Methanocorpusculum labreanum (strain ATCC 43576 / DSM 4855 / Z).